A 523-amino-acid polypeptide reads, in one-letter code: Tryptophan 6-halogenase SttH (523 aa).

FAD is bound by residues Gly14, Ser40, Ile43, Val46, Val48, and Ala51. Lys79 is a catalytic residue. Residue Pro97 participates in L-tryptophan binding. FAD-binding residues include Val203 and Leu354. Chloride-binding residues include Thr365 and Gly366. Ile367 is an FAD binding site. Positions 456 and 457 each coordinate L-tryptophan.

This sequence belongs to the flavin-dependent halogenase family. Bacterial tryptophan halogenase subfamily. As to quaternary structure, homodimer.

It carries out the reaction L-tryptophan + FADH2 + chloride + O2 = 6-chloro-L-tryptophan + FAD + 2 H2O. It catalyses the reaction D-tryptophan + FADH2 + chloride + O2 = 6-chloro-D-tryptophan + FAD + 2 H2O. Its function is as follows. Catalyzes the chlorination of tryptophan (Trp) at C6 position to yield 6-chloro-tryptophan. Accepts both L and D-Trp as the substrates. The enzyme also uses bromide to yield 6-bromo-Trp. In vitro, can also catalyze the halogenation of 3-indolepropionic acid, N-methyltryptophan and non-indolic aromatic substrates such as kynurenine, anthranilamide and N-phenylanthranilic acid. The polypeptide is Tryptophan 6-halogenase SttH (Streptomyces toxytricini (Actinomyces toxytricini)).